The primary structure comprises 699 residues: Elongation factor G 2 (699 aa).

Residues E8–T290 enclose the tr-type G domain. Residues A17–T24, D88–H92, and N142–D145 each bind GTP.

The protein belongs to the TRAFAC class translation factor GTPase superfamily. Classic translation factor GTPase family. EF-G/EF-2 subfamily.

Its subcellular location is the cytoplasm. Catalyzes the GTP-dependent ribosomal translocation step during translation elongation. During this step, the ribosome changes from the pre-translocational (PRE) to the post-translocational (POST) state as the newly formed A-site-bound peptidyl-tRNA and P-site-bound deacylated tRNA move to the P and E sites, respectively. Catalyzes the coordinated movement of the two tRNA molecules, the mRNA and conformational changes in the ribosome. The polypeptide is Elongation factor G 2 (Colwellia psychrerythraea (strain 34H / ATCC BAA-681) (Vibrio psychroerythus)).